Here is a 441-residue protein sequence, read N- to C-terminus: Transducin-like enhancer protein 7 (441 aa).

2 disordered regions span residues 1-77 (MSGE…QWHL) and 91-119 (PDAQ…SSSS). The span at 27 to 49 (ESSGVSSQPEPQVQQQLGSLLGV) shows a compositional bias: low complexity. The span at 62-76 (PADQETSTVTQQQWH) shows a compositional bias: polar residues. Residues 108–119 (GSEVGQPYSSSS) are compositionally biased toward low complexity. WD repeat units lie at residues 156–194 (FHGK…AGEK), 204–243 (HPQD…QVRA), 247–285 (STGP…LIRK), 286–325 (HEVP…RLHQ), and 409–441 (EESS…QLLY).

This sequence belongs to the WD repeat Groucho/TLE family.

This is Transducin-like enhancer protein 7 from Homo sapiens (Human).